Here is a 576-residue protein sequence, read N- to C-terminus: MKNFKAKIITAKQNVMEKTAKRENTLEPDEMKELEKKTTETKDFLRKLTKSVEKETLSSGVSIQDGTELADNFLDYSVHVRDNQSDLVILSGILSKIGEFQAGFEDLKSKLNSSLINDVSDPLKSIIKTELKQAKESKREYDRVRVAFDAHLSELANLRKQKNVKPPKIQESEEECERLRTNFERVGIDTTCLLRDTNVITEFETVEKLCDYLDSYHTFFQKGYRWLAQMIPDIYEYRLYVEKRKAELEKSKVRISMMVSPQKQQADSLSKTKCFGEDLSVLLNREGSTLPWFIVRAFQAIRNHIATEEGLFRLSGTKRIIYEYKQKIDEGKEYNLSEILDIHVVCNLVKLYLRELQPEPLLTYSRYNELIDTCNIEDQNQRVDKISKILSSLPKHYYTLLHHLIHLLSQIASQPKSKMGPANLATVIGPNILICQTDVVLEDIALGNMVVTTIIQNFDRIFGGPPLLQQSVPDTYVPPPNNTRNNSVNNFNNVQPSSFSASTSRSINLNKSTNNPNINDDNNNNNNINNSDDEPYDPNAPPIYSGVPMRGNIKHSDSCSTLGDSFDEGDAVELSD.

Residues 123–189 (LKSIIKTELK…RTNFERVGID (67 aa)) are a coiled coil. The Rho-GAP domain occupies 277 to 462 (EDLSVLLNRE…TIIQNFDRIF (186 aa)). Positions 472–576 (VPDTYVPPPN…DEGDAVELSD (105 aa)) are disordered. The span at 482 to 500 (NTRNNSVNNFNNVQPSSFS) shows a compositional bias: low complexity. The span at 501 to 513 (ASTSRSINLNKST) shows a compositional bias: polar residues. Residues 514-530 (NNPNINDDNNNNNNINN) are compositionally biased toward low complexity. Over residues 565–576 (SFDEGDAVELSD) the composition is skewed to acidic residues.

It is found in the cytoplasm. Its function is as follows. Rho GTPase-activating protein involved in the signal transduction pathway. This chain is Rho GTPase-activating protein gacP (gacP), found in Dictyostelium discoideum (Social amoeba).